The chain runs to 149 residues: Oligosaccharyltransferase complex subunit OSTC (149 aa).

Over 1 to 32 (METLYRVPFLVLECPNLKLKKPPWLHMPSAMT) the chain is Cytoplasmic. A helical membrane pass occupies residues 33-53 (VYALVVVSYFLITGGIIYDVI). Residues 54–83 (VEPPSVGSMTDEHGHQRPVAFLAYRVNGQY) lie on the Extracellular side of the membrane. The chain crosses the membrane as a helical span at residues 84-104 (IMEGLASSFLFTMGGLGFIIL). Over 105–117 (DRSNAPNIPKLNR) the chain is Cytoplasmic. A helical membrane pass occupies residues 118–138 (FLLLFIGFVCVLLSFFMARVF). The Extracellular segment spans residues 139-149 (MRMKLPGYLMG).

Belongs to the OSTC family. Component of STT3A-containing oligosaccharyl transferase (OST-A) complex. STT3A-containing complex assembly occurs through the formation of 3 subcomplexes. Subcomplex 1 contains RPN1 and TMEM258, subcomplex 2 contains the STT3A-specific subunits STT3A, DC2/OSTC, and KCP2 as well as the core subunit OST4, and subcomplex 3 contains RPN2, DAD1, and OST48. The OST-A complex can form stable complexes with the Sec61 complex or with both the Sec61 and TRAP complexes. Interacts with PSEN1 and NCSTN; indicative for an association with the gamma-secretase complex.

The protein localises to the endoplasmic reticulum. It is found in the membrane. It participates in protein modification; protein glycosylation. Subunit of STT3A-containing oligosaccharyl transferase (OST-A) complex that catalyzes the initial transfer of a defined glycan (Glc(3)Man(9)GlcNAc(2) in eukaryotes) from the lipid carrier dolichol-pyrophosphate to an asparagine residue within an Asn-X-Ser/Thr consensus motif in nascent polypeptide chains, the first step in protein N-glycosylation. N-glycosylation occurs cotranslationally and the complex associates with the Sec61 complex at the channel-forming translocon complex that mediates protein translocation across the endoplasmic reticulum (ER). Within the OST-A complex, acts as an adapter that anchors the OST-A complex to the Sec61 complex. May be involved in N-glycosylation of APP (amyloid-beta precursor protein). Can modulate gamma-secretase cleavage of APP by enhancing endoprotelysis of PSEN1. The protein is Oligosaccharyltransferase complex subunit OSTC of Homo sapiens (Human).